Consider the following 206-residue polypeptide: Adenylate kinase (206 aa).

Position 10 to 15 (Gly10 to Thr15) interacts with ATP. Positions Ser30–Val59 are NMP. AMP contacts are provided by residues Thr31, Glu57–Val59, Gly82–Arg85, and Gln89. ATP is bound by residues Arg120, Arg124, and Val133–Tyr134. Residues Gly123–Asp153 are LID. Arg161 provides a ligand contact to AMP. Lys189 lines the ATP pocket.

It belongs to the adenylate kinase family. In terms of assembly, monomer.

The protein resides in the cytoplasm. The catalysed reaction is AMP + ATP = 2 ADP. It participates in purine metabolism; AMP biosynthesis via salvage pathway; AMP from ADP: step 1/1. Its function is as follows. Catalyzes the reversible transfer of the terminal phosphate group between ATP and AMP. Plays an important role in cellular energy homeostasis and in adenine nucleotide metabolism. In Aquifex aeolicus (strain VF5), this protein is Adenylate kinase.